Consider the following 24-residue polypeptide: Defensin D5 (24 aa).

It belongs to the DEFL family. Group IV subfamily. In terms of tissue distribution, distributed in the epidermal cell layer of leaves and in the subepidermal layer region of stems. Not in roots.

It localises to the secreted. The protein resides in the cell wall. Antimicrobial peptide. Active against Fusarium spp., Gram-positive and Gram-negative bacterial pathogens. This Spinacia oleracea (Spinach) protein is Defensin D5.